We begin with the raw amino-acid sequence, 438 residues long: Phospholipase D Y (438 aa).

A signal peptide spans 1–19 (MIINRLFIIIVLFFVNVNS). N-linked (GlcNAc...) asparagine glycosylation occurs at N50. The PLD phosphodiesterase 1 domain occupies 145–172 (GSGVLHTKLIIIDESSAYVGSANADWSS). Residues H150, K152, and D157 contribute to the active site. N223, N336, and N394 each carry an N-linked (GlcNAc...) asparagine glycan. Positions 373–399 (YTRVNHAKFMVTEKQSYVGTSNWSQDY) constitute a PLD phosphodiesterase 2 domain.

It belongs to the phospholipase D family.

The enzyme catalyses a 1,2-diacyl-sn-glycero-3-phosphocholine + H2O = a 1,2-diacyl-sn-glycero-3-phosphate + choline + H(+). Inhibited by butan-1-ol. Functionally, hydrolyzes membrane phospholipids, such as PtdCho (phosphatidylcholine), producing the free headgroup and PtdOH (phosphatidic acid; signaling molecule on its own). The sequence is that of Phospholipase D Y (pldY) from Dictyostelium discoideum (Social amoeba).